Consider the following 371-residue polypeptide: Protein STRICTOSIDINE SYNTHASE-LIKE 6 (371 aa).

The first 21 residues, 1–21, serve as a signal peptide directing secretion; it reads MPVFLSSRFLFFCIIVPLLIS. Asparagine 101 and asparagine 137 each carry an N-linked (GlcNAc...) asparagine glycan. Tyrosine 303 is subject to Phosphotyrosine.

It belongs to the strictosidine synthase family.

The protein localises to the vacuole. This is Protein STRICTOSIDINE SYNTHASE-LIKE 6 from Arabidopsis thaliana (Mouse-ear cress).